Consider the following 275-residue polypeptide: NH(3)-dependent NAD(+) synthetase (275 aa).

50–57 lines the ATP pocket; that stretch reads GISGGVDS. Asp-56 contacts Mg(2+). Arg-147 lines the deamido-NAD(+) pocket. Thr-167 contributes to the ATP binding site. Mg(2+) is bound at residue Glu-172. Residues Lys-180 and Asp-187 each coordinate deamido-NAD(+). Positions 196 and 218 each coordinate ATP. 267 to 268 is a binding site for deamido-NAD(+); that stretch reads HK.

The protein belongs to the NAD synthetase family. Homodimer.

The enzyme catalyses deamido-NAD(+) + NH4(+) + ATP = AMP + diphosphate + NAD(+) + H(+). Its pathway is cofactor biosynthesis; NAD(+) biosynthesis; NAD(+) from deamido-NAD(+) (ammonia route): step 1/1. Catalyzes the ATP-dependent amidation of deamido-NAD to form NAD. Uses ammonia as a nitrogen source. This chain is NH(3)-dependent NAD(+) synthetase, found in Pseudomonas fluorescens (strain Pf0-1).